Here is a 158-residue protein sequence, read N- to C-terminus: Deoxyuridine 5'-triphosphate nucleotidohydrolase (158 aa).

Substrate is bound by residues 75–77, Asn88, 92–94, and Lys102; these read RSG and TVD.

It belongs to the dUTPase family. The cofactor is Mg(2+).

The enzyme catalyses dUTP + H2O = dUMP + diphosphate + H(+). Its pathway is pyrimidine metabolism; dUMP biosynthesis; dUMP from dCTP (dUTP route): step 2/2. In terms of biological role, this enzyme is involved in nucleotide metabolism: it produces dUMP, the immediate precursor of thymidine nucleotides and it decreases the intracellular concentration of dUTP so that uracil cannot be incorporated into DNA. The protein is Deoxyuridine 5'-triphosphate nucleotidohydrolase of Bifidobacterium longum subsp. infantis (strain ATCC 15697 / DSM 20088 / JCM 1222 / NCTC 11817 / S12).